The chain runs to 103 residues: Flagellar hook-basal body complex protein FliE (103 aa).

It belongs to the FliE family.

It is found in the bacterial flagellum basal body. The chain is Flagellar hook-basal body complex protein FliE from Cronobacter sakazakii (strain ATCC BAA-894) (Enterobacter sakazakii).